Reading from the N-terminus, the 214-residue chain is Transcriptional regulatory protein MctR (214 aa).

The region spanning 8 to 124 (RVLLIDNHPL…EIVSAIETVA (117 aa)) is the Response regulatory domain. 4-aspartylphosphate is present on aspartate 59. The HTH luxR-type domain occupies 143-208 (VEEGSDPLTP…GLIRYALDHG (66 aa)). The H-T-H motif DNA-binding region spans 167–186 (NKEIAETLGITSATAETHRK).

It is found in the cytoplasm. In terms of biological role, member of the two-component regulatory system MctS/MctR, which activates mctP expression. This chain is Transcriptional regulatory protein MctR, found in Rhizobium johnstonii (strain DSM 114642 / LMG 32736 / 3841) (Rhizobium leguminosarum bv. viciae).